Consider the following 228-residue polypeptide: NAD(P)H-hydrate epimerase (228 aa).

Positions 10-214 (AIDIDQELFN…DLERKYDLKI (205 aa)) constitute a YjeF N-terminal domain. Residue 58 to 62 (NNGGD) coordinates (6S)-NADPHX. Residues N59 and D123 each contribute to the K(+) site. (6S)-NADPHX contacts are provided by residues 127 to 133 (GFSFKPP) and D156. Residue S159 coordinates K(+).

This sequence belongs to the NnrE/AIBP family. K(+) serves as cofactor.

It carries out the reaction (6R)-NADHX = (6S)-NADHX. It catalyses the reaction (6R)-NADPHX = (6S)-NADPHX. Functionally, catalyzes the epimerization of the S- and R-forms of NAD(P)HX, a damaged form of NAD(P)H that is a result of enzymatic or heat-dependent hydration. This is a prerequisite for the S-specific NAD(P)H-hydrate dehydratase to allow the repair of both epimers of NAD(P)HX. This is NAD(P)H-hydrate epimerase from Pediculus humanus subsp. corporis (Body louse).